Consider the following 140-residue polypeptide: Large-conductance mechanosensitive channel (140 aa).

A run of 2 helical transmembrane segments spans residues 21–41 (VGVIIGGAFGKIVESLVGDVI) and 82–102 (GSFITVAINFMILAFIIFMMI).

It belongs to the MscL family. In terms of assembly, homopentamer.

Its subcellular location is the cell inner membrane. Functionally, channel that opens in response to stretch forces in the membrane lipid bilayer. May participate in the regulation of osmotic pressure changes within the cell. The protein is Large-conductance mechanosensitive channel of Leptothrix cholodnii (strain ATCC 51168 / LMG 8142 / SP-6) (Leptothrix discophora (strain SP-6)).